The following is a 276-amino-acid chain: Proteasome subunit beta type-8 (276 aa).

The disordered stretch occupies residues 1-33 (MALLDVCGAPRGQRPESALPVAGSGRRSDPGHY). Residues 1 to 72 (MALLDVCGAP…RNVQIEMAHG (72 aa)) constitute a propeptide, removed in mature form. Position 5 is a phosphothreonine (Asp-5). The active-site Nucleophile is the Thr-73.

The protein belongs to the peptidase T1B family. The 26S proteasome consists of a 20S proteasome core and two 19S regulatory subunits. The 20S proteasome core is composed of 28 subunits that are arranged in four stacked rings, resulting in a barrel-shaped structure. The two end rings are each formed by seven alpha subunits, and the two central rings are each formed by seven beta subunits. The catalytic chamber with the active sites is on the inside of the barrel. Component of the immunoproteasome, where it displaces the equivalent housekeeping subunit PSMB5. Component of the spermatoproteasome, a form of the proteasome specifically found in testis. Directly interacts with POMP. Interacts with TAP1. In terms of assembly, (Microbial infection) Interacts with HIV-1 TAT protein. In terms of processing, autocleaved. The resulting N-terminal Thr residue of the mature subunit is responsible for the nucleophile proteolytic activity.

The protein resides in the cytoplasm. Its subcellular location is the nucleus. The enzyme catalyses Cleavage of peptide bonds with very broad specificity.. The proteasome is a multicatalytic proteinase complex which is characterized by its ability to cleave peptides with Arg, Phe, Tyr, Leu, and Glu adjacent to the leaving group at neutral or slightly basic pH. The proteasome has an ATP-dependent proteolytic activity. This subunit is involved in antigen processing to generate class I binding peptides. Replacement of PSMB5 by PSMB8 increases the capacity of the immunoproteasome to cleave model peptides after hydrophobic and basic residues. Involved in the generation of spliced peptides resulting from the ligation of two separate proteasomal cleavage products that are not contiguous in the parental protein. Acts as a major component of interferon gamma-induced sensitivity. Plays a key role in apoptosis via the degradation of the apoptotic inhibitor MCL1. May be involved in the inflammatory response pathway. In cancer cells, substitution of isoform 1 (E2) by isoform 2 (E1) results in immunoproteasome deficiency. Required for the differentiation of preadipocytes into adipocytes. The sequence is that of Proteasome subunit beta type-8 (PSMB8) from Homo sapiens (Human).